A 386-amino-acid polypeptide reads, in one-letter code: O-methyltransferase 10 (386 aa).

Positions 207, 231, 254, 274, and 288 each coordinate S-adenosyl-L-homocysteine. Position 254 (Asp254) interacts with S-adenosyl-L-methionine. The active-site Proton acceptor is His292.

It belongs to the class I-like SAM-binding methyltransferase superfamily. Cation-independent O-methyltransferase family. As to quaternary structure, homodimer.

It catalyses the reaction dopamine + S-adenosyl-L-methionine = 4-methoxytyramine + S-adenosyl-L-homocysteine + H(+). The catalysed reaction is 3,4-dihydroxy-5-methoxyphenethylamine + S-adenosyl-L-methionine = 3-hydroxy-4,5-dimethoxyphenethylamine + S-adenosyl-L-homocysteine + H(+). The enzyme catalyses 3-hydroxy-4,5-dimethoxyphenethylamine + S-adenosyl-L-methionine = mescaline + S-adenosyl-L-homocysteine + H(+). It carries out the reaction 4-hydroxy-3,5-dimethoxyphenethylamine + S-adenosyl-L-methionine = mescaline + S-adenosyl-L-homocysteine + H(+). It functions in the pathway aromatic compound metabolism. The protein operates within alkaloid biosynthesis. Its function is as follows. O-methyltransferase participating in the biosynthesis of natural products derived from phenylethylamine, including mescaline, a natural hallucinogen potentially used in psychotherapeutic treatments. Catalyzes the O-methylation of mescaline para hydroxyl groups, using dopamine, 3,4-dihydroxy-5-methoxyphenethylamine, 3-hydroxy-4,5-dimethoxyphenethylamine and 4-hydroxy-3,5-dimethoxyphenethylamine as substrates. The sequence is that of O-methyltransferase 10 from Lophophora williamsii (Peyote).